Here is a 173-residue protein sequence, read N- to C-terminus: Flavodoxin 2 (173 aa).

The Flavodoxin-like domain occupies 3-165 (MGLFYGSSTC…RIQSWCEQIL (163 aa)).

This sequence belongs to the flavodoxin family. The cofactor is FMN.

In terms of biological role, low-potential electron donor to a number of redox enzymes. This Escherichia coli O157:H7 protein is Flavodoxin 2 (fldB).